Reading from the N-terminus, the 178-residue chain is Cytidylate kinase 2 (178 aa).

An ATP-binding site is contributed by 7–15; sequence GKSGCGNTT.

It belongs to the cytidylate kinase family. Type 2 subfamily.

It localises to the cytoplasm. It catalyses the reaction CMP + ATP = CDP + ADP. The catalysed reaction is dCMP + ATP = dCDP + ADP. This is Cytidylate kinase 2 from Borreliella afzelii (strain PKo) (Borrelia afzelii).